The sequence spans 177 residues: ATP synthase subunit delta (177 aa).

Belongs to the ATPase delta chain family. In terms of assembly, F-type ATPases have 2 components, F(1) - the catalytic core - and F(0) - the membrane proton channel. F(1) has five subunits: alpha(3), beta(3), gamma(1), delta(1), epsilon(1). F(0) has three main subunits: a(1), b(2) and c(10-14). The alpha and beta chains form an alternating ring which encloses part of the gamma chain. F(1) is attached to F(0) by a central stalk formed by the gamma and epsilon chains, while a peripheral stalk is formed by the delta and b chains.

Its subcellular location is the cell inner membrane. Functionally, f(1)F(0) ATP synthase produces ATP from ADP in the presence of a proton or sodium gradient. F-type ATPases consist of two structural domains, F(1) containing the extramembraneous catalytic core and F(0) containing the membrane proton channel, linked together by a central stalk and a peripheral stalk. During catalysis, ATP synthesis in the catalytic domain of F(1) is coupled via a rotary mechanism of the central stalk subunits to proton translocation. Its function is as follows. This protein is part of the stalk that links CF(0) to CF(1). It either transmits conformational changes from CF(0) to CF(1) or is implicated in proton conduction. This chain is ATP synthase subunit delta, found in Shigella flexneri.